A 63-amino-acid chain; its full sequence is Conotoxin Vi5.1b (63 aa).

A signal peptide spans 1–22 (MLCVPVFIILFIIIPFAPTSES). Residues 23–50 (QPKTKEEVAKASVHDNAERTLQRLWNQS) constitute a propeptide that is removed on maturation. At P62 the chain carries Proline amide.

The protein belongs to the conotoxin T superfamily. In terms of processing, contains 2 disulfide bonds that can be either 'C1-C3, C2-C4' or 'C1-C4, C2-C3', since these disulfide connectivities have been observed for conotoxins with cysteine framework V (for examples, see AC P0DQQ7 and AC P81755). As to expression, expressed by the venom duct.

It localises to the secreted. The protein is Conotoxin Vi5.1b of Conus virgo (Virgin cone).